A 51-amino-acid polypeptide reads, in one-letter code: DNA-binding protein (51 aa).

Residues 1–51 are disordered; it reads MVYRRRRSRSADGTYTRRRRSSGYRRRPGRPRTYRRSRSATRRSGYRRRRY. 2 repeat units span residues 5–10 and 17–22. Positions 5-22 are 2 X 6 AA repeats of R-R-R-R-S-S; that stretch reads RRRSRSADGTYTRRRRSS. Positions 16-51 are enriched in basic residues; that stretch reads TRRRRSSGYRRRPGRPRTYRRSRSATRRSGYRRRRY.

Probably phosphorylated in infected cells.

The protein localises to the virion. Thought to be responsible for DNA condensation during packaging of the nucleocapsids. The chain is DNA-binding protein (P6.5) from Orgyia pseudotsugata (Douglas-fir tussock moth).